The sequence spans 378 residues: Queuine tRNA-ribosyltransferase (378 aa).

The active-site Proton acceptor is aspartate 91. Residues 91–95 (DSGGF), aspartate 145, glutamine 189, and glycine 216 each bind substrate. Residues 247 to 253 (GVGKPED) are RNA binding. The active-site Nucleophile is the aspartate 266. The segment at 271–275 (TRNAR) is RNA binding; important for wobble base 34 recognition. Residues cysteine 304, cysteine 306, cysteine 309, and histidine 335 each contribute to the Zn(2+) site.

This sequence belongs to the queuine tRNA-ribosyltransferase family. As to quaternary structure, homodimer. Within each dimer, one monomer is responsible for RNA recognition and catalysis, while the other monomer binds to the replacement base PreQ1. It depends on Zn(2+) as a cofactor.

It catalyses the reaction 7-aminomethyl-7-carbaguanine + guanosine(34) in tRNA = 7-aminomethyl-7-carbaguanosine(34) in tRNA + guanine. It functions in the pathway tRNA modification; tRNA-queuosine biosynthesis. In terms of biological role, catalyzes the base-exchange of a guanine (G) residue with the queuine precursor 7-aminomethyl-7-deazaguanine (PreQ1) at position 34 (anticodon wobble position) in tRNAs with GU(N) anticodons (tRNA-Asp, -Asn, -His and -Tyr). Catalysis occurs through a double-displacement mechanism. The nucleophile active site attacks the C1' of nucleotide 34 to detach the guanine base from the RNA, forming a covalent enzyme-RNA intermediate. The proton acceptor active site deprotonates the incoming PreQ1, allowing a nucleophilic attack on the C1' of the ribose to form the product. After dissociation, two additional enzymatic reactions on the tRNA convert PreQ1 to queuine (Q), resulting in the hypermodified nucleoside queuosine (7-(((4,5-cis-dihydroxy-2-cyclopenten-1-yl)amino)methyl)-7-deazaguanosine). This chain is Queuine tRNA-ribosyltransferase, found in Vibrio vulnificus (strain CMCP6).